A 168-amino-acid chain; its full sequence is Phosphopantetheine adenylyltransferase (168 aa).

Residue threonine 10 coordinates substrate. ATP-binding positions include 10-11 and histidine 18; that span reads TF. Substrate-binding residues include lysine 42, leucine 74, and arginine 88. ATP is bound by residues 89–91, glutamate 99, and 124–130; these read GLR and NSFISST.

The protein belongs to the bacterial CoaD family. Homohexamer. Mg(2+) is required as a cofactor.

It localises to the cytoplasm. It carries out the reaction (R)-4'-phosphopantetheine + ATP + H(+) = 3'-dephospho-CoA + diphosphate. It functions in the pathway cofactor biosynthesis; coenzyme A biosynthesis; CoA from (R)-pantothenate: step 4/5. Its function is as follows. Reversibly transfers an adenylyl group from ATP to 4'-phosphopantetheine, yielding dephospho-CoA (dPCoA) and pyrophosphate. This Shewanella frigidimarina (strain NCIMB 400) protein is Phosphopantetheine adenylyltransferase.